A 338-amino-acid chain; its full sequence is Cytochrome c biogenesis protein CcsA (338 aa).

8 consecutive transmembrane segments (helical) span residues 11-31 (VLLDNAAFAALMVATALYWLA), 39-59 (LLHELGTGASAVALLSVTGLL), 76-96 (ESLFFLCWCVLAVHIAAEAFA), 100-120 (LVGVFTLPVALGMVAFSSLTL), 145-165 (VMILSYGALMVGSLVSIAFLI), 244-264 (LIGLGFPLITVGIIAGAVWAN), 278-295 (TWSLITWFIFAAYLHARI), and 305-325 (ATLAAVGFVSVWITYLGVNFL).

This sequence belongs to the CcmF/CycK/Ccl1/NrfE/CcsA family. As to quaternary structure, may interact with ccs1.

It localises to the cell inner membrane. Functionally, required during biogenesis of c-type cytochromes (cytochrome c6 and cytochrome f) at the step of heme attachment. The protein is Cytochrome c biogenesis protein CcsA of Gloeobacter violaceus (strain ATCC 29082 / PCC 7421).